A 426-amino-acid chain; its full sequence is Probable serine/threonine-protein kinase PBL3 (426 aa).

The disordered stretch occupies residues 1-42; it reads MGNCLDSSAKVDSSSHSPHANSASLSSRVSSKTSRSTVPSSL. A lipid anchor (N-myristoyl glycine) is attached at Gly-2. A lipid anchor (S-palmitoyl cysteine) is attached at Cys-4. A compositionally biased stretch (low complexity) spans 7–42; it reads SSAKVDSSSHSPHANSASLSSRVSSKTSRSTVPSSL. Thr-72 bears the Phosphothreonine mark. Residues 83 to 366 enclose the Protein kinase domain; that stretch reads FRPDSLLGEG…SEVLAKLDQL (284 aa). Residues 89–97 and Lys-121 contribute to the ATP site; that span reads LGEGGFGYV. At Tyr-166 the chain carries Phosphotyrosine. The active-site Proton acceptor is Asp-216. Ser-250 is subject to Phosphoserine. Phosphothreonine is present on residues Thr-251 and Thr-256. Tyr-264 bears the Phosphotyrosine mark. A compositionally biased stretch (polar residues) spans 367-394; the sequence is ESTKPGTGVGNRQAQIDSPRGSNGSIVQ. The interval 367-426 is disordered; it reads ESTKPGTGVGNRQAQIDSPRGSNGSIVQKSPRRYSYDRPLLHITPGASPLPTHNHSPRVR.

It belongs to the protein kinase superfamily. Ser/Thr protein kinase family. In terms of assembly, interacts with the Xanthomonas campestris effector XopAC/AvrAC. Strongly expressed in leaves, moderately in flowers, and barely in roots.

Its subcellular location is the cell membrane. The protein resides in the nucleus. The catalysed reaction is L-seryl-[protein] + ATP = O-phospho-L-seryl-[protein] + ADP + H(+). It catalyses the reaction L-threonyl-[protein] + ATP = O-phospho-L-threonyl-[protein] + ADP + H(+). Functionally, may be involved in plant defense signaling. The protein is Probable serine/threonine-protein kinase PBL3 of Arabidopsis thaliana (Mouse-ear cress).